A 349-amino-acid chain; its full sequence is Putative F-box/LRR-repeat protein At3g16555 (349 aa).

Residues 1–48 (MVLLPWELEEDILSRLPPRSLVQFRSVCKRWNALFDVKSFNKDQFARA) enclose the F-box domain. The LRR repeat unit spans residues 267-290 (VVWISLLTLPPNNLPNLFIVCYGI).

The protein is Putative F-box/LRR-repeat protein At3g16555 of Arabidopsis thaliana (Mouse-ear cress).